The primary structure comprises 213 residues: Imidazole glycerol phosphate synthase subunit HisH (213 aa).

The 208-residue stretch at 6–213 folds into the Glutamine amidotransferase type-1 domain; the sequence is LVTVIDYGMG…FKNFLNWNGQ (208 aa). Cys-86 acts as the Nucleophile in catalysis. Residues His-192 and Glu-194 contribute to the active site.

In terms of assembly, heterodimer of HisH and HisF.

It localises to the cytoplasm. The catalysed reaction is 5-[(5-phospho-1-deoxy-D-ribulos-1-ylimino)methylamino]-1-(5-phospho-beta-D-ribosyl)imidazole-4-carboxamide + L-glutamine = D-erythro-1-(imidazol-4-yl)glycerol 3-phosphate + 5-amino-1-(5-phospho-beta-D-ribosyl)imidazole-4-carboxamide + L-glutamate + H(+). It catalyses the reaction L-glutamine + H2O = L-glutamate + NH4(+). It functions in the pathway amino-acid biosynthesis; L-histidine biosynthesis; L-histidine from 5-phospho-alpha-D-ribose 1-diphosphate: step 5/9. Functionally, IGPS catalyzes the conversion of PRFAR and glutamine to IGP, AICAR and glutamate. The HisH subunit catalyzes the hydrolysis of glutamine to glutamate and ammonia as part of the synthesis of IGP and AICAR. The resulting ammonia molecule is channeled to the active site of HisF. The sequence is that of Imidazole glycerol phosphate synthase subunit HisH from Hydrogenovibrio crunogenus (strain DSM 25203 / XCL-2) (Thiomicrospira crunogena).